The sequence spans 2180 residues: Genome polyprotein (2180 aa).

Disordered regions lie at residues 507 to 529, 624 to 679, 703 to 809, and 822 to 848; these read DGADHTPKIPKRNVVLPSGAKDP, QPQK…YPIQ, KRAK…NTLP, and SEVEDEVDGMTEEPIPERRPEITPPKM. Positions 573–624 form a coiled coil; the sequence is SKNQGLIRVLEQQLQDLNKRICPPGTSLFHFFDQQKSEMASLKEQIRLLKEQ. 2 stretches are compositionally biased toward polar residues: residues 631–643 and 670–679; these read DTPSYQSSYQPFH and PSLFSQYPIQ. Over residues 703–716 the composition is skewed to basic and acidic residues; that stretch reads KRAKKKLQKDEVKQ. Polar residues predominate over residues 759-771; that stretch reads SEDTSSQSYISTE. The span at 784-807 shows a compositional bias: low complexity; that stretch reads SEESTQLSQLSSSSNDSPENNENT. Residues 822 to 832 are compositionally biased toward acidic residues; sequence SEVEDEVDGMT. The segment at 1113–1126 adopts a CCHC-type zinc-finger fold; it reads CFTCGKIGHFSRNC. Asp-1227 (for protease activity; shared with dimeric partner) is an active-site residue. Mg(2+)-binding residues include Asp-1480, Asp-1543, and Asp-1544. 3 disordered regions span residues 1824–1848, 2115–2145, and 2161–2180; these read RRTRSNSTKSKADSSQSTGSSYKLS, NIVKNSPRKRKGKAKSKSSTRNEKRRAKNKC, and YSTKPSTPSWTQDSSSEPCI. Over residues 1828 to 1847 the composition is skewed to polar residues; sequence SNSTKSKADSSQSTGSSYKL. Over residues 2120-2145 the composition is skewed to basic residues; that stretch reads SPRKRKGKAKSKSSTRNEKRRAKNKC. Residues 2163–2180 are compositionally biased toward polar residues; it reads TKPSTPSWTQDSSSEPCI.

This sequence belongs to the Petuviruses genome polyprotein family.

It carries out the reaction DNA(n) + a 2'-deoxyribonucleoside 5'-triphosphate = DNA(n+1) + diphosphate. In terms of biological role, encodes presumably for at least four polypeptides: Movement protein (MP), capsid protein (CP), Protease (PR), and reverse transcriptase (RT). The protein is Genome polyprotein of Petunia (PVCV).